The sequence spans 339 residues: Biotin synthase (339 aa).

The 228-residue stretch at 55 to 282 (NAVQLSTLLS…KAVVRLSAGR (228 aa)) folds into the Radical SAM core domain. Positions 70, 74, and 77 each coordinate [4Fe-4S] cluster. 4 residues coordinate [2Fe-2S] cluster: C114, C145, C205, and R277.

It belongs to the radical SAM superfamily. Biotin synthase family. In terms of assembly, homodimer. Requires [4Fe-4S] cluster as cofactor. [2Fe-2S] cluster serves as cofactor.

It catalyses the reaction (4R,5S)-dethiobiotin + (sulfur carrier)-SH + 2 reduced [2Fe-2S]-[ferredoxin] + 2 S-adenosyl-L-methionine = (sulfur carrier)-H + biotin + 2 5'-deoxyadenosine + 2 L-methionine + 2 oxidized [2Fe-2S]-[ferredoxin]. The protein operates within cofactor biosynthesis; biotin biosynthesis; biotin from 7,8-diaminononanoate: step 2/2. Its function is as follows. Catalyzes the conversion of dethiobiotin (DTB) to biotin by the insertion of a sulfur atom into dethiobiotin via a radical-based mechanism. The protein is Biotin synthase of Burkholderia orbicola (strain MC0-3).